Consider the following 259-residue polypeptide: MLDKVKHIILVLSGKGGVGKSTVSTQLALTLAEADHKVGLLDIDLCGPSVPYLLGLEDRDVHQCDEGWVPVYTSAEKRLAVMSIGFLLKNRSDAVIWRGPKKTAMIKQFLEDVNWDELDYLIIDTPPGTSDEHITVMECLKTVRTEGAIIVTTPQEMALEDVRKEVTFCKKTGIPILGIVENMSGFVCPNCSECTNIFSSGGGHSLAELAKVPHLGTLPIDPRVGELAGTGKACVKELPDCTTSEVLRELVRTLTTVGQ.

14–21 (GKGGVGKS) lines the ATP pocket. The [4Fe-4S] cluster site is built by cysteine 188 and cysteine 191.

The protein belongs to the Mrp/NBP35 ATP-binding proteins family. NUBP2/CFD1 subfamily. Heterotetramer of 2 Nubp1 and 2 Nubp2 chains. It depends on [4Fe-4S] cluster as a cofactor.

Its subcellular location is the cytoplasm. Its function is as follows. Component of the cytosolic iron-sulfur (Fe/S) protein assembly (CIA) machinery. Required for maturation of extramitochondrial Fe-S proteins. The Nubp1-Nubp2 heterotetramer forms a Fe-S scaffold complex, mediating the de novo assembly of an Fe-S cluster and its transfer to target apoproteins. This is Cytosolic Fe-S cluster assembly factor Nubp2 homolog from Anopheles gambiae (African malaria mosquito).